Reading from the N-terminus, the 1131-residue chain is PPi-type phosphoenolpyruvate carboxykinase (1131 aa).

It belongs to the PPi-type phosphoenolpyruvate carboxykinase family. As to quaternary structure, monomer and trimer; forms heterotrimers with PEPCK2 and PEPCK3.

The catalysed reaction is oxaloacetate + diphosphate = phosphoenolpyruvate + phosphate + CO2. Inorganic pyrophosphate (PPi)-dependent phosphoenolpyruvate carboxykinase, which regulates the carbon flow of the central metabolism by fixing CO(2) to phosphoenolpyruvate to produce oxaloacetate. Can also produce pyruvate and diphosphate from phosphoenolpyruvate and phosphate. This is PPi-type phosphoenolpyruvate carboxykinase from Propionibacterium freudenreichii subsp. freudenreichii.